Reading from the N-terminus, the 147-residue chain is Protein SPMIP3 (147 aa).

The sequence is that of Protein SPMIP3 from Homo sapiens (Human).